Consider the following 146-residue polypeptide: UPF0742 protein C1348.03 (146 aa).

The chain crosses the membrane as a helical span at residues 38 to 60; that stretch reads LTVKYCLAVKLLIYLLYCWYIYS.

It belongs to the UPF0742 family.

The protein resides in the cytoplasm. The protein localises to the nucleus membrane. The chain is UPF0742 protein C1348.03 from Schizosaccharomyces pombe (strain 972 / ATCC 24843) (Fission yeast).